A 1264-amino-acid chain; its full sequence is Protein kibra (1264 aa).

The span at 1–14 (MSNQQQQQLPRQLP) shows a compositional bias: low complexity. The segment at 1 to 40 (MSNQQQQQLPRQLPQPHPHHHHHHHQQQPGQHSEFPLPDG) is disordered. The span at 17–26 (HPHHHHHHHQ) shows a compositional bias: basic residues. WW domains are found at residues 35-68 (FPLP…DPRD) and 82-115 (DELP…DPRQ). Coiled coils occupy residues 129-215 (LSAA…YTER), 258-288 (EKVR…AELL), and 319-445 (AEMA…RLKS). Low complexity predominate over residues 513–544 (PAVQLQQQHQLQQQTQPQPASEVSLSPRSSLS). The tract at residues 513-545 (PAVQLQQQHQLQQQTQPQPASEVSLSPRSSLSI) is disordered. Residues 691–811 (ELAQVQIGLK…NPDDSTLKWY (121 aa)) form the C2 domain. Composition is skewed to low complexity over residues 845-856 (IINNNNNNNNNN) and 864-876 (ESTI…STLT). 2 disordered regions span residues 845-880 (IINN…RNQA) and 1200-1254 (RNKN…RYDY).

The protein belongs to the WWC family. KIBRA subfamily. Forms a complex with Mer and Ex. Interacts (via domain WW 1) with Ex (via RXPPXY motif). Interacts with Mer, Sav, Hpo and Wts.

The protein localises to the cytoplasm. It localises to the apical cell membrane. In terms of biological role, regulator of the Hippo/SWH (Sav/Wts/Hpo) signaling pathway, a signaling pathway that plays a pivotal role in organ size control and tumor suppression by restricting proliferation and promoting apoptosis. The core of this pathway is composed of a kinase cascade wherein Hippo (Hpo), in complex with its regulatory protein Salvador (Sav), phosphorylates and activates Warts (Wts) in complex with its regulatory protein Mats, which in turn phosphorylates and inactivates the Yorkie (Yki) oncoprotein. Kibra acts synergistically along with Ex and Mer to regulate the Hippo signaling pathway. The sequence is that of Protein kibra (Kibra) from Drosophila mojavensis (Fruit fly).